The primary structure comprises 201 residues: MQTSPLLESLMEALRCLPGVGPKSAQRMAFHLLQRDRSGGMRLAQALTRAMSEIGHCCDCRTFTEEERCTICANARRQQNGQICVVESPADIHAIEQTGQFAGRYFVLMGHLSPLDGIGPMDIGLDRLEERLSQEPISEVILATNPTVEGEATANYIAEICAQYDIAASRIAHGVPVGGELEMVDGTTLSHSIAGRQKIHY.

A C4-type zinc finger spans residues 57-72 (CCDCRTFTEEERCTIC). The 96-residue stretch at 81–176 (GQICVVESPA…AASRIAHGVP (96 aa)) folds into the Toprim domain.

The protein belongs to the RecR family.

May play a role in DNA repair. It seems to be involved in an RecBC-independent recombinational process of DNA repair. It may act with RecF and RecO. The protein is Recombination protein RecR of Proteus mirabilis (strain HI4320).